The primary structure comprises 87 residues: Translation initiation factor IF-1 2 (87 aa).

The 72-residue stretch at 1–72 folds into the S1-like domain; sequence MAKEEVIEME…TKGRINFRHK (72 aa).

It belongs to the IF-1 family. As to quaternary structure, component of the 30S ribosomal translation pre-initiation complex which assembles on the 30S ribosome in the order IF-2 and IF-3, IF-1 and N-formylmethionyl-tRNA(fMet); mRNA recruitment can occur at any time during PIC assembly.

It is found in the cytoplasm. Functionally, one of the essential components for the initiation of protein synthesis. Stabilizes the binding of IF-2 and IF-3 on the 30S subunit to which N-formylmethionyl-tRNA(fMet) subsequently binds. Helps modulate mRNA selection, yielding the 30S pre-initiation complex (PIC). Upon addition of the 50S ribosomal subunit IF-1, IF-2 and IF-3 are released leaving the mature 70S translation initiation complex. The polypeptide is Translation initiation factor IF-1 2 (Thiobacillus denitrificans (strain ATCC 25259 / T1)).